A 707-amino-acid polypeptide reads, in one-letter code: Elongation factor G (707 aa).

The 290-residue stretch at 8-297 (ERVRNIGIAA…AVLDYLPSPL (290 aa)) folds into the tr-type G domain. Residues 17–24 (AHIDAGKT), 96–100 (DTPGH), and 150–153 (NKMD) contribute to the GTP site.

Belongs to the TRAFAC class translation factor GTPase superfamily. Classic translation factor GTPase family. EF-G/EF-2 subfamily.

The protein localises to the cytoplasm. Functionally, catalyzes the GTP-dependent ribosomal translocation step during translation elongation. During this step, the ribosome changes from the pre-translocational (PRE) to the post-translocational (POST) state as the newly formed A-site-bound peptidyl-tRNA and P-site-bound deacylated tRNA move to the P and E sites, respectively. Catalyzes the coordinated movement of the two tRNA molecules, the mRNA and conformational changes in the ribosome. This Gloeobacter violaceus (strain ATCC 29082 / PCC 7421) protein is Elongation factor G.